The chain runs to 444 residues: Gustatory receptor 5a for trehalose (444 aa).

Over 1–56 (MRQLKGRNRCNRAVRHLKIQGKMWLKNLKSGLEQIRESQVRGTRKNFLHDGSFHEA) the chain is Cytoplasmic. The chain crosses the membrane as a helical span at residues 57–77 (VAPVLAVAQCFCLMPVCGISA). Topologically, residues 78–178 (PTYRGLSFNR…RARPARRLKL (101 aa)) are extracellular. The chain crosses the membrane as a helical span at residues 179–199 (VAFVLLVVSLMEHLLSIISVV). The Cytoplasmic segment spans residues 200–214 (YYDFCPRRSDPVESY). A helical membrane pass occupies residues 215–235 (LLGASAQLFEVFPYSNWLAWL). Residues 236–240 (GKIQN) lie on the Extracellular side of the membrane. The helical transmembrane segment at 241–261 (VLLTFGWSYMDIFLMMLGMGL) threads the bilayer. Over 262 to 305 (SEMLARLNRSLEQQVRQPMPEAYWTWSRTLYRSIVELIREVDDA) the chain is Cytoplasmic. Residues 306–326 (VSGIMLISFGSNLYFICLQLL) traverse the membrane as a helical segment. Residues 327–338 (KSINTMPSSAHA) lie on the Extracellular side of the membrane. A helical transmembrane segment spans residues 339-359 (VYFYFSLLFLLSRSTAVLLFV). Topologically, residues 360–410 (SAINDQAREPLRLLRLVPLKGYHPEVFRFAAELASDQVALTGLKFFNVTRK) are cytoplasmic. The helical transmembrane segment at 411–431 (LFLAMAGTVATYELVLIQFHE) threads the bilayer. Residues 432–444 (DKKTWDCSPFNLD) are Extracellular-facing.

The protein belongs to the insect chemoreceptor superfamily. Gustatory receptor (GR) family. Gr5a subfamily. In terms of tissue distribution, expressed in labellar chemosensory neurons.

It is found in the cell membrane. In terms of biological role, gustatory receptor required for response to the sugar trehalose in taste neurons. Gr5a neurons selectively respond to sugars, in contrast to Gr66a cells which respond to bitter compounds. Flies are attracted to sugars and avoid bitter substances, suggesting that Gr5a neuron activity is sufficient to mediate acceptance behavior. Sugar signal transduction occurs through coupling with G-proteins such as Galpha49B and G-salpha60A. The polypeptide is Gustatory receptor 5a for trehalose (Gr5a) (Drosophila melanogaster (Fruit fly)).